Consider the following 114-residue polypeptide: Putative movement protein (114 aa).

The chain crosses the membrane as a helical span at residues 27–47 (LIGIILLVTVCLTVLWVCIML). Residues 79 to 114 (RTPFEATGPERERNWEARRQSTTVNPASQPNTGSVF) are disordered. Residues 86–97 (GPERERNWEARR) are compositionally biased toward basic and acidic residues. A compositionally biased stretch (polar residues) spans 98–114 (QSTTVNPASQPNTGSVF).

Belongs to the nanovirus movement protein family.

The protein resides in the host cell membrane. May transport viral genome to neighboring plant cells directly through plasmosdesmata, without any budding. The movement protein allows efficient cell to cell propagation, by bypassing the host cell wall barrier. This is Putative movement protein (DNA-M) from Faba bean necrotic yellows virus (isolate Egyptian EV1-93) (FBNYV).